The primary structure comprises 552 residues: Putative transport protein NT01EI_3867 (552 aa).

5 helical membrane-spanning segments follow: residues 4 to 24 (IALT…IGNW), 26 to 46 (IYGV…VGHF), 65 to 85 (FGLI…FFSS), 90 to 112 (GLRL…AAIH), and 158 to 178 (MGYA…IWLI). 2 consecutive RCK C-terminal domains span residues 191 to 276 (RDFD…VIGE) and 279 to 361 (DTSL…IVGN). The next 6 membrane-spanning stretches (helical) occupy residues 371–391 (MLPV…PLFI), 403–425 (AGGP…LYWF), 439–459 (IVLF…DTLL), 464–484 (VTWI…AALL), 493–513 (YLTL…LAFA), and 530–550 (VYPL…LLFW).

The protein belongs to the AAE transporter (TC 2.A.81) family. YidE subfamily.

It localises to the cell membrane. The polypeptide is Putative transport protein NT01EI_3867 (Edwardsiella ictaluri (strain 93-146)).